A 79-amino-acid polypeptide reads, in one-letter code: uncharacterized protein (79 aa).

Residues 53 to 73 (LFFAYMVAYIGFGILSIGMIV) form a helical membrane-spanning segment.

The protein resides in the membrane. This is an uncharacterized protein from Escherichia coli O157:H7.